Here is a 458-residue protein sequence, read N- to C-terminus: A-type ATP synthase subunit B (458 aa).

This sequence belongs to the ATPase alpha/beta chains family. Has multiple subunits with at least A(3), B(3), C, D, E, F, H, I and proteolipid K(x).

Its subcellular location is the cell membrane. Component of the A-type ATP synthase that produces ATP from ADP in the presence of a proton gradient across the membrane. The B chain is a regulatory subunit. This Methanocella arvoryzae (strain DSM 22066 / NBRC 105507 / MRE50) protein is A-type ATP synthase subunit B.